Consider the following 136-residue polypeptide: Congerin-2 (136 aa).

The residue at position 2 (S2) is an N-acetylserine. A Galectin domain is found at 4 to 136; sequence RAEVRNIPFK…DARLTFVRLE (133 aa). 70–76 provides a ligand contact to a beta-D-galactoside; the sequence is WQQEERS.

In terms of assembly, homodimer.

Functionally, this protein binds beta-galactoside. Its physiological function is not yet known. This is Congerin-2 from Conger myriaster (Conger eel).